The primary structure comprises 419 residues: Enolase (419 aa).

Q161 is a binding site for (2R)-2-phosphoglycerate. The Proton donor role is filled by E205. D240, E283, and D309 together coordinate Mg(2+). 4 residues coordinate (2R)-2-phosphoglycerate: K334, R363, S364, and K385. K334 acts as the Proton acceptor in catalysis.

It belongs to the enolase family. Mg(2+) is required as a cofactor.

Its subcellular location is the cytoplasm. The protein localises to the secreted. It is found in the cell surface. It carries out the reaction (2R)-2-phosphoglycerate = phosphoenolpyruvate + H2O. Its pathway is carbohydrate degradation; glycolysis; pyruvate from D-glyceraldehyde 3-phosphate: step 4/5. Its function is as follows. Catalyzes the reversible conversion of 2-phosphoglycerate (2-PG) into phosphoenolpyruvate (PEP). It is essential for the degradation of carbohydrates via glycolysis. The sequence is that of Enolase from Saccharolobus islandicus (strain M.16.27) (Sulfolobus islandicus).